The chain runs to 27 residues: U18-ctenitoxin-Co1a (27 aa).

It belongs to the u18-CNTX family. Expressed by the venom gland.

Its subcellular location is the secreted. In terms of biological role, not toxic to mice by intracerebroventricular injection. This chain is U18-ctenitoxin-Co1a, found in Ctenus ornatus (Brazilian spider).